The primary structure comprises 87 residues: Type 3 secretion system needle filament protein (87 aa).

Belongs to the SctF family. The core secretion machinery of the T3SS is composed of approximately 20 different proteins, including cytoplasmic components, a base, an export apparatus and a needle. This subunit polymerizes and forms the helical needle filament. In Y.enterocolitica E40, the needles are composed of 139 (plus-minus 19) YscF/SctF subunits.

The protein resides in the secreted. Its subcellular location is the cell surface. Its activity is regulated as follows. The secretion and/or polymerization may be controlled by the type III secretion system regulator YopR. In terms of biological role, component of the type III secretion system (T3SS), also called injectisome, which is used to inject bacterial effector proteins into eukaryotic host cells. YscF/SctF forms the external needle filament that protrudes from the bacterial surface. The needle is not sufficient by itself for the formation of a pore allowing translocation of the Yop effectors across the host cell membrane. This chain is Type 3 secretion system needle filament protein, found in Yersinia enterocolitica.